Here is a 310-residue protein sequence, read N- to C-terminus: B3 domain-containing protein At4g02870 (310 aa).

Positions 1–21 (MTLSDDPISPSTQESSNSSYV) are enriched in polar residues. The tract at residues 1-39 (MTLSDDPISPSTQESSNSSYVRSKEAEKNSPSQETDEEV) is disordered. The TF-B3 DNA-binding region spans 205-300 (RCGRLILQSS…RLQFGVISRN (96 aa)).

The protein localises to the nucleus. This chain is B3 domain-containing protein At4g02870 (ARF42), found in Arabidopsis thaliana (Mouse-ear cress).